A 189-amino-acid polypeptide reads, in one-letter code: Alanine and glycine-rich protein (189 aa).

Residues 127–160 (AGAGGGSGGGGGGGSGSGGSGGSGGSGGSGGNDG) are compositionally biased toward gly residues. Residues 127-170 (AGAGGGSGGGGGGGSGSGGSGGSGGSGGSGGNDGNDGNDGSSSR) are disordered.

Component of the organic matrix of calcified shell layers like nacre and prisms.

It localises to the secreted. This Mytilus californianus (California mussel) protein is Alanine and glycine-rich protein.